Consider the following 232-residue polypeptide: GFP-like fluorescent chromoprotein dsFP483 (232 aa).

Positions 66–68 (QYG) form a cross-link, 2-iminomethyl-5-imidazolinone (Gln-Gly). Tyrosine 67 is subject to 2,3-didehydrotyrosine.

Belongs to the GFP family. Post-translationally, contains a chromophore consisting of modified amino acid residues. The chromophore is formed by autocatalytic backbone condensation between Xaa-N and Gly-(N+2), oxidation of Tyr-(N+1) to didehydrotyrosine, and formation of a double bond to the alpha-amino nitrogen of residue Xaa-N. Maturation of the chromophore requires nothing other than molecular oxygen. The precise stereochemistry of the tyrosine has not been determined. Oral disk.

In terms of biological role, pigment protein that is green in color. This is GFP-like fluorescent chromoprotein dsFP483 from Discosoma striata (Striped mushroom).